We begin with the raw amino-acid sequence, 46 residues long: Mu-segestritoxin-Sf1c (46 aa).

Intrachain disulfides connect C3/C19, C10/C22, C18/C42, and C24/C40. A keys region for toxin activity region spans residues 31–33 (RPW).

It belongs to the neurotoxin 16 (SFI) family. As to expression, expressed by the venom gland.

It localises to the secreted. Its function is as follows. Insecticidal toxin. It inhibits insect voltage-gated sodium channels (Nav) by partially blocking the channel pore in DUM neurons from the American cockroach, not by acting as a gating modifier. The inhibition is only partially reversible after prolonged washout. In vivo, the toxin causes flaccid paralysis followed by death when injected into Heliothis virescens larvae. It also causes uncoordinated movements followed by full paralysis to sheep blowflies (Lucilia cuprina). When the toxin is fused to snowdrop lectin, it is orally active against larvae of the tomato moth (Laconobia oleracea), the rice brown planthopper (Nilaparvata lugens), and the peach-potato aphid (Myzus persicae). This chain is Mu-segestritoxin-Sf1c, found in Segestria florentina (Tube-web spider).